Here is a 159-residue protein sequence, read N- to C-terminus: Phosphopantetheine adenylyltransferase (159 aa).

Substrate is bound at residue Ser9. ATP contacts are provided by residues 9–10 (SF) and His17. Residues Lys41, Leu73, and Lys87 each coordinate substrate. ATP is bound by residues 88-90 (GLR), Glu98, and 123-129 (YSYLSSS).

Belongs to the bacterial CoaD family. Homohexamer. Requires Mg(2+) as cofactor.

The protein resides in the cytoplasm. It carries out the reaction (R)-4'-phosphopantetheine + ATP + H(+) = 3'-dephospho-CoA + diphosphate. Its pathway is cofactor biosynthesis; coenzyme A biosynthesis; CoA from (R)-pantothenate: step 4/5. Reversibly transfers an adenylyl group from ATP to 4'-phosphopantetheine, yielding dephospho-CoA (dPCoA) and pyrophosphate. This Clostridium botulinum (strain Eklund 17B / Type B) protein is Phosphopantetheine adenylyltransferase.